The sequence spans 86 residues: Small ribosomal subunit protein eS27 (86 aa).

The C4-type zinc-finger motif lies at 39–61 (CQGCFNITTVFSHSQTVVVCPGC).

Belongs to the eukaryotic ribosomal protein eS27 family. It depends on Zn(2+) as a cofactor.

The protein is Small ribosomal subunit protein eS27 (RPS27) of Hordeum vulgare (Barley).